We begin with the raw amino-acid sequence, 192 residues long: Adenylate kinase (192 aa).

Residue 11–16 (GSGKGT) coordinates ATP. The interval 31–60 (STGDIFRANVKGETPLGIEAKKYMDNGDFV) is NMP. Residues Thr32, Arg37, 58–60 (DFV), 86–89 (GYPR), and Gln93 each bind AMP. An LID region spans residues 127 to 137 (GRAKETGRSDD). Arg128 lines the ATP pocket. AMP is bound by residues Arg134 and Arg145. Gly173 contributes to the ATP binding site.

The protein belongs to the adenylate kinase family. In terms of assembly, monomer.

Its subcellular location is the cytoplasm. It carries out the reaction AMP + ATP = 2 ADP. Its pathway is purine metabolism; AMP biosynthesis via salvage pathway; AMP from ADP: step 1/1. Its function is as follows. Catalyzes the reversible transfer of the terminal phosphate group between ATP and AMP. Plays an important role in cellular energy homeostasis and in adenine nucleotide metabolism. This chain is Adenylate kinase, found in Pseudarthrobacter chlorophenolicus (strain ATCC 700700 / DSM 12829 / CIP 107037 / JCM 12360 / KCTC 9906 / NCIMB 13794 / A6) (Arthrobacter chlorophenolicus).